Consider the following 165-residue polypeptide: V-type proton ATPase subunit c2 (165 aa).

Topologically, residues Met1 to Pro12 are lumenal. A helical transmembrane segment spans residues Phe13–Gly33. The Cytoplasmic portion of the chain corresponds to Thr34–Ser55. Residues Ile56–Ile76 form a helical membrane-spanning segment. The Lumenal portion of the chain corresponds to Ser77–His95. Residues Leu96–Gly117 traverse the membrane as a helical segment. The Cytoplasmic portion of the chain corresponds to Asp118–Lys129. A helical membrane pass occupies residues Leu130 to Leu155. The Lumenal segment spans residues Ser156–Glu165.

This sequence belongs to the V-ATPase proteolipid subunit family. In terms of assembly, V-ATPase is a heteromultimeric enzyme composed of a peripheral catalytic V1 complex (components A to H) attached to an integral membrane V0 proton pore complex (components: a, c, c'', d and e). The proteolipid components c and c'' are present as a hexameric ring that forms the proton-conducting pore. Expressed in leaf, root, flower and silique, with lower expression in roots.

It is found in the vacuole membrane. Functionally, proton-conducting pore forming subunit of the membrane integral V0 complex of vacuolar ATPase. V-ATPase is responsible for acidifying a variety of intracellular compartments in eukaryotic cells. The sequence is that of V-type proton ATPase subunit c2 (VHA-c2) from Arabidopsis thaliana (Mouse-ear cress).